Consider the following 461-residue polypeptide: ATP synthase subunit beta (461 aa).

151-158 provides a ligand contact to ATP; the sequence is GGAGVGKT.

Belongs to the ATPase alpha/beta chains family. F-type ATPases have 2 components, CF(1) - the catalytic core - and CF(0) - the membrane proton channel. CF(1) has five subunits: alpha(3), beta(3), gamma(1), delta(1), epsilon(1). CF(0) has three main subunits: a(1), b(2) and c(9-12). The alpha and beta chains form an alternating ring which encloses part of the gamma chain. CF(1) is attached to CF(0) by a central stalk formed by the gamma and epsilon chains, while a peripheral stalk is formed by the delta and b chains.

It is found in the cell inner membrane. It carries out the reaction ATP + H2O + 4 H(+)(in) = ADP + phosphate + 5 H(+)(out). Its function is as follows. Produces ATP from ADP in the presence of a proton gradient across the membrane. The catalytic sites are hosted primarily by the beta subunits. This Colwellia psychrerythraea (strain 34H / ATCC BAA-681) (Vibrio psychroerythus) protein is ATP synthase subunit beta.